Reading from the N-terminus, the 249-residue chain is Mannose-binding protein C (249 aa).

A signal peptide spans 1–20; the sequence is MSLFTSLPFLLLTAVTASCA. The Collagen-like domain occupies 43–101; that stretch reads GINGIPGKDGRDGAKGEKGEPGQGLRGSQGPPGKMGPQGTPGIPGIPGPIGQKGDPGEN. Residues 43-103 form a disordered region; sequence GINGIPGKDG…QKGDPGENMG (61 aa). Pro48 carries the post-translational modification 4-hydroxyproline. Residues 50–62 show a composition bias toward basic and acidic residues; sequence KDGRDGAKGEKGE. 4-hydroxyproline is present on residues Pro63, Pro74, Pro83, and Pro86. A compositionally biased stretch (low complexity) spans 79–95; that stretch reads PQGTPGIPGIPGPIGQK. Positions 113 to 131 form a coiled coil; sequence RATLQSELNQIKNWLIFSL. One can recognise a C-type lectin domain in the interval 135-246; it reads VGKKAFFTNG…CSASFLTVCE (112 aa). Disulfide bonds link Cys156/Cys245 and Cys223/Cys237.

In terms of assembly, oligomeric complex of 3 or more homotrimers. Interacts with MASP1 and MASP2. Interacts with MEP1A and MEP1B and may inhibit their catalytic activity. Post-translationally, hydroxylation on proline residues within the sequence motif, GXPG, is most likely to be 4-hydroxy as this fits the requirement for 4-hydroxylation in vertebrates.

It is found in the secreted. In terms of biological role, calcium-dependent lectin involved in innate immune defense. Binds mannose, fucose and N-acetylglucosamine on different microorganisms and activates the lectin complement pathway. Binds to late apoptotic cells, as well as to apoptotic blebs and to necrotic cells, but not to early apoptotic cells, facilitating their uptake by macrophages. The sequence is that of Mannose-binding protein C (MBL) from Bos taurus (Bovine).